Consider the following 523-residue polypeptide: Bifunctional purine biosynthesis protein PurH (523 aa).

In terms of domain architecture, MGS-like spans 1 to 150 (MSDVVPVRNA…KNHGDVAIAT (150 aa)).

This sequence belongs to the PurH family.

The catalysed reaction is (6R)-10-formyltetrahydrofolate + 5-amino-1-(5-phospho-beta-D-ribosyl)imidazole-4-carboxamide = 5-formamido-1-(5-phospho-D-ribosyl)imidazole-4-carboxamide + (6S)-5,6,7,8-tetrahydrofolate. It carries out the reaction IMP + H2O = 5-formamido-1-(5-phospho-D-ribosyl)imidazole-4-carboxamide. It functions in the pathway purine metabolism; IMP biosynthesis via de novo pathway; 5-formamido-1-(5-phospho-D-ribosyl)imidazole-4-carboxamide from 5-amino-1-(5-phospho-D-ribosyl)imidazole-4-carboxamide (10-formyl THF route): step 1/1. The protein operates within purine metabolism; IMP biosynthesis via de novo pathway; IMP from 5-formamido-1-(5-phospho-D-ribosyl)imidazole-4-carboxamide: step 1/1. The chain is Bifunctional purine biosynthesis protein PurH from Rhodopirellula baltica (strain DSM 10527 / NCIMB 13988 / SH1).